The chain runs to 90 residues: Large ribosomal subunit protein uL23c (90 aa).

This sequence belongs to the universal ribosomal protein uL23 family. In terms of assembly, part of the 50S ribosomal subunit.

It localises to the plastid. The protein localises to the chloroplast. In terms of biological role, binds to 23S rRNA. The chain is Large ribosomal subunit protein uL23c (rpl23) from Tetradesmus obliquus (Green alga).